A 278-amino-acid polypeptide reads, in one-letter code: HTH-type transcriptional regulator HdfR (278 aa).

Positions 1–58 (MDTELLKTFLEVSRTRHFGRAAEALYLTQSAVSFRIRQLENQLGVNLFTRHRNNIRLT) constitute an HTH lysR-type domain. The H-T-H motif DNA-binding region spans 18–37 (FGRAAEALYLTQSAVSFRIR).

This sequence belongs to the LysR transcriptional regulatory family.

Its function is as follows. Negatively regulates the transcription of the flagellar master operon flhDC by binding to the upstream region of the operon. The polypeptide is HTH-type transcriptional regulator HdfR (Salmonella dublin (strain CT_02021853)).